Here is a 318-residue protein sequence, read N- to C-terminus: Mevalonate 3-kinase (318 aa).

Leucine 19 contacts substrate. ATP is bound by residues 96–100 (YSSQN) and 105–108 (SGSS). Residues glutamate 140 and arginine 144 each contribute to the substrate site. ATP contacts are provided by arginine 185 and serine 188.

It belongs to the GHMP kinase family. In terms of assembly, homodimer.

It carries out the reaction (R)-mevalonate + ATP = (R)-3-phosphomevalonate + ADP + H(+). It participates in isoprenoid biosynthesis; isopentenyl diphosphate biosynthesis via mevalonate pathway. In terms of biological role, catalyzes the phosphorylation of mevalonate (MVA) to yield mevalonate-3-phosphate. Functions in an alternative mevalonate pathway, only present in extreme acidophiles of the Thermoplasmatales order, which passes through mevalonate 3-phosphate rather than mevalonate 5-phosphate. The chain is Mevalonate 3-kinase from Thermoplasma acidophilum (strain ATCC 25905 / DSM 1728 / JCM 9062 / NBRC 15155 / AMRC-C165).